Reading from the N-terminus, the 399-residue chain is Succinate--CoA ligase [ADP-forming] subunit beta (399 aa).

An ATP-grasp domain is found at 9 to 254; it reads KAVLAEFGAP…ESEEDPKEIE (246 aa). Residues K46, 53–55, E109, A112, and E117 each bind ATP; that span reads GRG. Positions 209 and 223 each coordinate Mg(2+). Substrate contacts are provided by residues N274 and 331 to 333; that span reads GIM.

Belongs to the succinate/malate CoA ligase beta subunit family. As to quaternary structure, heterotetramer of two alpha and two beta subunits. It depends on Mg(2+) as a cofactor.

The enzyme catalyses succinate + ATP + CoA = succinyl-CoA + ADP + phosphate. The catalysed reaction is GTP + succinate + CoA = succinyl-CoA + GDP + phosphate. It functions in the pathway carbohydrate metabolism; tricarboxylic acid cycle; succinate from succinyl-CoA (ligase route): step 1/1. Functionally, succinyl-CoA synthetase functions in the citric acid cycle (TCA), coupling the hydrolysis of succinyl-CoA to the synthesis of either ATP or GTP and thus represents the only step of substrate-level phosphorylation in the TCA. The beta subunit provides nucleotide specificity of the enzyme and binds the substrate succinate, while the binding sites for coenzyme A and phosphate are found in the alpha subunit. This is Succinate--CoA ligase [ADP-forming] subunit beta from Caulobacter vibrioides (strain NA1000 / CB15N) (Caulobacter crescentus).